A 106-amino-acid chain; its full sequence is Cell division topological specificity factor (106 aa).

The protein belongs to the MinE family.

Prevents the cell division inhibition by proteins MinC and MinD at internal division sites while permitting inhibition at polar sites. This ensures cell division at the proper site by restricting the formation of a division septum at the midpoint of the long axis of the cell. The sequence is that of Cell division topological specificity factor from Prochlorococcus marinus (strain SARG / CCMP1375 / SS120).